The sequence spans 422 residues: UDP-N-acetylglucosamine 1-carboxyvinyltransferase (422 aa).

22 to 23 is a binding site for phosphoenolpyruvate; sequence KN. Arg-95 is a binding site for UDP-N-acetyl-alpha-D-glucosamine. Residue Cys-119 is the Proton donor of the active site. At Cys-119 the chain carries 2-(S-cysteinyl)pyruvic acid O-phosphothioketal. UDP-N-acetyl-alpha-D-glucosamine-binding positions include 124-128, Asp-309, and Val-331; that span reads RPIDQ.

This sequence belongs to the EPSP synthase family. MurA subfamily.

It localises to the cytoplasm. The enzyme catalyses phosphoenolpyruvate + UDP-N-acetyl-alpha-D-glucosamine = UDP-N-acetyl-3-O-(1-carboxyvinyl)-alpha-D-glucosamine + phosphate. It functions in the pathway cell wall biogenesis; peptidoglycan biosynthesis. Cell wall formation. Adds enolpyruvyl to UDP-N-acetylglucosamine. This Anaeromyxobacter sp. (strain K) protein is UDP-N-acetylglucosamine 1-carboxyvinyltransferase.